A 147-amino-acid polypeptide reads, in one-letter code: Hemoglobin subunit epsilon (147 aa).

The Globin domain maps to 3–147; that stretch reads HLTAEEKAAI…VAIALGHKYH (145 aa). 2 positions are modified to phosphoserine: Ser14 and Ser51. Heme b-binding residues include His64 and His93.

This sequence belongs to the globin family. As to quaternary structure, heterotetramer of two alpha chains and two epsilon chains in early embryonic hemoglobin Gower-2; two zeta chains and two epsilon chains in early embryonic hemoglobin Gower-1. In terms of tissue distribution, red blood cells.

Functionally, the epsilon chain is a beta-type chain of early mammalian embryonic hemoglobin. The protein is Hemoglobin subunit epsilon (HBE1) of Ateles belzebuth (White-bellied spider monkey).